The primary structure comprises 727 residues: Iron-sulfur clusters transporter ATM1, mitochondrial (727 aa).

The N-terminal 25 residues, 1-25 (MLIGGAQNRLYQLRTSNILGLLRTR), are a transit peptide targeting the mitochondrion. Over 26-138 (SALRVGSKVE…PRGNTKVKVR (113 aa)) the chain is Mitochondrial matrix. Positions 87 to 107 (KSKLPNEDTAHNASEKNSKKT) are disordered. Basic and acidic residues predominate over residues 90–107 (LPNEDTAHNASEKNSKKT). A helical membrane pass occupies residues 139–160 (VLLALALLIGAKVLNVQVPFFF). Residues 139 to 429 (VLLALALLIG…LGSVYRELKQ (291 aa)) form the ABC transmembrane type-1 domain. The Mitochondrial intermembrane segment spans residues 161–183 (KQIIDGMNVDWSDATVALPAALG). Residues 184–207 (LTIMCYGLARFGAVLFGELRNAIF) form a helical membrane-spanning segment. Topologically, residues 208-256 (ARVAQNAIRNVSLQTFEHLMKLDLGWHLSRQTGGLTRAMDRGTKGISYV) are mitochondrial matrix. Residues 257-280 (LSAMVFHIIPITFEISVVCGILTY) form a helical membrane-spanning segment. Position 281 (Gln-281) is a topological domain, mitochondrial intermembrane. The helical transmembrane segment at 282 to 302 (FGASFAGITFTTMLLYSIFTI) threads the bilayer. Residues 303 to 368 (RTTAWRTRFR…SQVKVAQSLA (66 aa)) are Mitochondrial matrix-facing. Residues 308 to 312 (RTRFR) and 371 to 374 (NSGQ) each bind glutathione. The helical transmembrane segment at 369-387 (FLNSGQSLIFTTALTGMMY) threads the bilayer. Residues 388–402 (MGCTGVIGGDLTVGD) are Mitochondrial intermembrane-facing. A helical membrane pass occupies residues 403–424 (LVLINQLVFQLSVPLNFLGSVY). Gly-421 is a binding site for glutathione. The Mitochondrial matrix portion of the chain corresponds to 425-727 (RELKQSLIDM…ETLEKLNKSI (303 aa)). In terms of domain architecture, ABC transporter spans 465–701 (IKFENVTFGY…ENSLYKELWR (237 aa)). Residues Tyr-474 and 498 to 509 (GPSGSGKSTVLK) contribute to the ATP site.

The protein belongs to the ABC transporter superfamily. ABCB family. Heavy Metal importer (TC 3.A.1.210) subfamily. As to quaternary structure, homodimer.

The protein resides in the mitochondrion inner membrane. Its function is as follows. Performs an essential function in the generation of cytoplasmic iron-sulfur proteins by mediating the ATP-dependent export of Fe/S cluster precursors synthesized by NFS1 and other mitochondrial proteins. Hydrolyzes ATP. Binds glutathione and may function by transporting a glutathione-conjugated iron-sulfur compound. The chain is Iron-sulfur clusters transporter ATM1, mitochondrial from Candida glabrata (strain ATCC 2001 / BCRC 20586 / JCM 3761 / NBRC 0622 / NRRL Y-65 / CBS 138) (Yeast).